We begin with the raw amino-acid sequence, 426 residues long: Serine--tRNA ligase (426 aa).

T231–E233 is a binding site for L-serine. R262–E264 is an ATP binding site. Residue E285 coordinates L-serine. E349–S352 contributes to the ATP binding site. S385 serves as a coordination point for L-serine.

It belongs to the class-II aminoacyl-tRNA synthetase family. Type-1 seryl-tRNA synthetase subfamily. In terms of assembly, homodimer. The tRNA molecule binds across the dimer.

The protein localises to the cytoplasm. The catalysed reaction is tRNA(Ser) + L-serine + ATP = L-seryl-tRNA(Ser) + AMP + diphosphate + H(+). The enzyme catalyses tRNA(Sec) + L-serine + ATP = L-seryl-tRNA(Sec) + AMP + diphosphate + H(+). The protein operates within aminoacyl-tRNA biosynthesis; selenocysteinyl-tRNA(Sec) biosynthesis; L-seryl-tRNA(Sec) from L-serine and tRNA(Sec): step 1/1. Functionally, catalyzes the attachment of serine to tRNA(Ser). Is also able to aminoacylate tRNA(Sec) with serine, to form the misacylated tRNA L-seryl-tRNA(Sec), which will be further converted into selenocysteinyl-tRNA(Sec). The protein is Serine--tRNA ligase of Myxococcus xanthus (strain DK1622).